Here is a 349-residue protein sequence, read N- to C-terminus: Peptide transport system ATP-binding protein SapD (349 aa).

The 259-residue stretch at 1 to 259 (MALLDICNLN…PHHPYTQALI (259 aa)) folds into the ABC transporter domain. ATP is bound at residue 40–47 (GESGSGKS).

It belongs to the ABC transporter superfamily.

The protein localises to the cell inner membrane. In terms of biological role, involved in a peptide intake transport system that plays a role in the resistance to antimicrobial peptides. The chain is Peptide transport system ATP-binding protein SapD (sapD) from Haemophilus influenzae (strain ATCC 51907 / DSM 11121 / KW20 / Rd).